Reading from the N-terminus, the 604-residue chain is Netrin-1 (604 aa).

An N-terminal signal peptide occupies residues 1–24 (MMRAVWEALAALAAVACLVGAVRG). A Laminin N-terminal domain is found at 47–284 (HPRRCIPDFV…AVSDLQVGGR (238 aa)). Residues Asn95, Asn116, and Asn131 are each glycosylated (N-linked (GlcNAc...) asparagine). Intrachain disulfides connect Cys119–Cys152, Cys285–Cys294, Cys287–Cys304, Cys306–Cys315, Cys318–Cys338, Cys341–Cys350, Cys343–Cys368, Cys371–Cys380, Cys383–Cys401, Cys404–Cys416, Cys406–Cys423, Cys425–Cys434, Cys437–Cys451, Cys472–Cys544, and Cys491–Cys601. Laminin EGF-like domains follow at residues 285-340 (CKCN…ECVA), 341-403 (CNCN…ACKA), and 404-453 (CDCH…PCIK). Asn417 carries N-linked (GlcNAc...) asparagine glycosylation. Residues 472 to 601 (CDSYCKASKG…FQQREKKGKC (130 aa)) form the NTR domain. Residues 530 to 532 (RGD) carry the Cell attachment site motif.

In terms of assembly, binds to its receptors; DCC, UNC5A, UNC5B, UNC5C and probably UNC5D. Binds to its receptor; DSCAM. Interacts with DCC. Interacts with APP. In terms of tissue distribution, widely expressed in normal adult tissues with highest levels in heart, small intestine, colon, liver and prostate. Reduced expression in brain tumors and neuroblastomas. Expressed in epididymis (at protein level).

The protein resides in the secreted. The protein localises to the cytoplasm. Functionally, netrins control guidance of CNS commissural axons and peripheral motor axons. Its association with either DCC or some UNC5 receptors will lead to axon attraction or repulsion, respectively. Binding to UNC5C might cause dissociation of UNC5C from polymerized TUBB3 in microtubules and thereby lead to increased microtubule dynamics and axon repulsion. Involved in dorsal root ganglion axon projection towards the spinal cord. It also serves as a survival factor via its association with its receptors which prevent the initiation of apoptosis. Involved in tumorigenesis by regulating apoptosis. The polypeptide is Netrin-1 (NTN1) (Homo sapiens (Human)).